Reading from the N-terminus, the 156-residue chain is Ribosomal RNA large subunit methyltransferase H (156 aa).

S-adenosyl-L-methionine is bound by residues leucine 73, glycine 104, and isoleucine 123 to leucine 128.

This sequence belongs to the RNA methyltransferase RlmH family. Homodimer.

It localises to the cytoplasm. The enzyme catalyses pseudouridine(1915) in 23S rRNA + S-adenosyl-L-methionine = N(3)-methylpseudouridine(1915) in 23S rRNA + S-adenosyl-L-homocysteine + H(+). Functionally, specifically methylates the pseudouridine at position 1915 (m3Psi1915) in 23S rRNA. The sequence is that of Ribosomal RNA large subunit methyltransferase H from Stenotrophomonas maltophilia (strain K279a).